Here is a 557-residue protein sequence, read N- to C-terminus: 2-isopropylmalate synthase (557 aa).

One can recognise a Pyruvate carboxyltransferase domain in the interval 31 to 304 (PTWCSVDLRD…DPGLNFASML (274 aa)). Mg(2+) contacts are provided by Asp-40, His-243, His-245, and Asn-279. Positions 439–557 (IENPIKFLNF…NTMIKDSAAV (119 aa)) are regulatory domain.

Belongs to the alpha-IPM synthase/homocitrate synthase family. LeuA type 2 subfamily. In terms of assembly, homodimer. Mg(2+) is required as a cofactor.

The protein resides in the cytoplasm. It carries out the reaction 3-methyl-2-oxobutanoate + acetyl-CoA + H2O = (2S)-2-isopropylmalate + CoA + H(+). It functions in the pathway amino-acid biosynthesis; L-leucine biosynthesis; L-leucine from 3-methyl-2-oxobutanoate: step 1/4. Functionally, catalyzes the condensation of the acetyl group of acetyl-CoA with 3-methyl-2-oxobutanoate (2-ketoisovalerate) to form 3-carboxy-3-hydroxy-4-methylpentanoate (2-isopropylmalate). This is 2-isopropylmalate synthase from Desulfitobacterium hafniense (strain Y51).